The following is a 305-amino-acid chain: Probable lipid kinase YegS-like (305 aa).

Positions Met-1–Ile-129 constitute a DAGKc domain. Residues Thr-39, Gly-65–Asp-71, and Thr-92 contribute to the ATP site. Residues Leu-210, Asp-213, and Leu-215 each coordinate Mg(2+). Glu-268 acts as the Proton acceptor in catalysis.

It belongs to the diacylglycerol/lipid kinase family. YegS lipid kinase subfamily. Mg(2+) serves as cofactor. The cofactor is Ca(2+).

Its subcellular location is the cytoplasm. Probably phosphorylates lipids; the in vivo substrate is unknown. In Pseudomonas fluorescens (strain Pf0-1), this protein is Probable lipid kinase YegS-like.